Reading from the N-terminus, the 393-residue chain is Tryptophan 2,3-dioxygenase (393 aa).

Residues 56–60 (FIVTH) and arginine 127 contribute to the substrate site. Histidine 312 is a heme binding site. Threonine 327 lines the substrate pocket.

The protein belongs to the tryptophan 2,3-dioxygenase family. Homotetramer. Dimer of dimers. Heme is required as a cofactor.

It carries out the reaction L-tryptophan + O2 = N-formyl-L-kynurenine. The protein operates within amino-acid degradation; L-tryptophan degradation via kynurenine pathway; L-kynurenine from L-tryptophan: step 1/2. It functions in the pathway pigment biosynthesis; ommochrome biosynthesis. Stimulated by low concentrations of hydrogen peroxide (5 uM), ascorbate (0.1-0.3 mM), and sodium hydrosulfite (0.1 mM). Inhibited by high concentrations of hydrogen peroxide (0.1 mM), ascorbate (10 mM), and sodium hydrosulfite (1 mM). Its function is as follows. Heme-dependent dioxygenase that catalyzes the oxidative cleavage of the L-tryptophan (L-Trp) pyrrole ring and converts L-tryptophan to N-formyl-L-kynurenine. Catalyzes the oxidative cleavage of the indole moiety. The chain is Tryptophan 2,3-dioxygenase from Aedes aegypti (Yellowfever mosquito).